Here is a 613-residue protein sequence, read N- to C-terminus: Zinc metalloproteinase-disintegrin-like atragin (613 aa).

Residues methionine 1–serine 20 form the signal peptide. Residues isoleucine 21–leucine 191 constitute a propeptide that is removed on maturation. A Peptidase M12B domain is found at lysine 205 to proline 400. Ca(2+)-binding residues include glutamate 208 and aspartate 292. Intrachain disulfides connect cysteine 316–cysteine 395 and cysteine 356–cysteine 379. Zn(2+) is bound by residues histidine 341, histidine 345, and histidine 351. Positions 395, 398, 410, 413, 415, 417, 420, and 423 each coordinate Ca(2+). The region spanning proline 408–asparagine 494 is the Disintegrin domain. Intrachain disulfides connect cysteine 411/cysteine 440, cysteine 422/cysteine 435, cysteine 424/cysteine 430, cysteine 434/cysteine 457, cysteine 448/cysteine 454, cysteine 453/cysteine 479, cysteine 466/cysteine 486, cysteine 473/cysteine 505, cysteine 498/cysteine 510, cysteine 517/cysteine 567, cysteine 532/cysteine 575, cysteine 542/cysteine 577, cysteine 545/cysteine 555, cysteine 562/cysteine 601, and cysteine 595/cysteine 606. Asparagine 436 carries N-linked (GlcNAc...) asparagine glycosylation. The short motif at aspartate 472–aspartate 474 is the D/ECD-tripeptide element. The Ca(2+) site is built by aspartate 474, leucine 475, glutamate 477, aspartate 489, and valine 490. Residues valine 560–isoleucine 574 are hypervariable region that may play important roles toward cell migration.

Belongs to the venom metalloproteinase (M12B) family. P-III subfamily. P-IIIa sub-subfamily. As to quaternary structure, monomer. The cofactor is Zn(2+). Expressed by the venom gland.

Its subcellular location is the secreted. Its function is as follows. Snake venom zinc metalloproteinase that seems to inhibit cell migration. This activity is dominated by the local structure of the hyper-variable region. The sequence is that of Zinc metalloproteinase-disintegrin-like atragin from Naja atra (Chinese cobra).